Consider the following 300-residue polypeptide: MKIGHQFHTVALVGRSNTPGIAEPLASLAACIAKRGFEVVFEADTAQAIGSAGYPALTPAEIGARAGVAVVLGGDGTMLGMGRQLAPYKTPLIGINHGRLGFITDIPASDMREVVPMMLAGSYEREERTLLEARIVRNGEPIYHALAFNDVVVNRSGFSGMAELRVSVDGRFMYNQRSDGLIVATPTGSTAYALSSQGPILHPQLQGIVLVPIAPHALSNRPIVLPDDSKIAIQIIGGRDVNVNFDMQSFTALELNDTIEVRRSKHTVPFLHPVGYSYYATLRKKLHWNEHPSSEEDDDA.

Asp75 serves as the catalytic Proton acceptor. NAD(+) contacts are provided by residues 75–76, 149–150, Arg177, Asp179, 190–195, Ala214, and Gln248; these read DG, ND, and TAYALS.

The protein belongs to the NAD kinase family. A divalent metal cation is required as a cofactor.

The protein localises to the cytoplasm. The enzyme catalyses NAD(+) + ATP = ADP + NADP(+) + H(+). Functionally, involved in the regulation of the intracellular balance of NAD and NADP, and is a key enzyme in the biosynthesis of NADP. Catalyzes specifically the phosphorylation on 2'-hydroxyl of the adenosine moiety of NAD to yield NADP. The protein is NAD kinase of Burkholderia mallei (strain SAVP1).